A 559-amino-acid chain; its full sequence is Formate--tetrahydrofolate ligase (559 aa).

Residue 67–74 participates in ATP binding; sequence TPAGEGKS.

This sequence belongs to the formate--tetrahydrofolate ligase family.

It catalyses the reaction (6S)-5,6,7,8-tetrahydrofolate + formate + ATP = (6R)-10-formyltetrahydrofolate + ADP + phosphate. It functions in the pathway one-carbon metabolism; tetrahydrofolate interconversion. In Lactobacillus delbrueckii subsp. bulgaricus (strain ATCC BAA-365 / Lb-18), this protein is Formate--tetrahydrofolate ligase.